A 407-amino-acid chain; its full sequence is Argininosuccinate synthase (407 aa).

ATP-binding positions include 13-21 and Ala40; that span reads AYSGGLDTS. Positions 91 and 96 each coordinate L-citrulline. Gly121 is an ATP binding site. Residues Thr123, Asn127, and Asp128 each coordinate L-aspartate. Asn127 lines the L-citrulline pocket. The L-citrulline site is built by Arg131, Ser182, Ser191, Glu267, and Tyr279.

Belongs to the argininosuccinate synthase family. Type 1 subfamily. As to quaternary structure, homotetramer.

The protein localises to the cytoplasm. The enzyme catalyses L-citrulline + L-aspartate + ATP = 2-(N(omega)-L-arginino)succinate + AMP + diphosphate + H(+). Its pathway is amino-acid biosynthesis; L-arginine biosynthesis; L-arginine from L-ornithine and carbamoyl phosphate: step 2/3. The protein is Argininosuccinate synthase of Rhizobium etli (strain ATCC 51251 / DSM 11541 / JCM 21823 / NBRC 15573 / CFN 42).